Reading from the N-terminus, the 283-residue chain is Hydrogenase expression/formation protein HoxQ (283 aa).

The interval 1–29 (MNDDLPILPPGFGPGSHGEEERPDCPSMP) is disordered.

It belongs to the HupH/HyaF family.

The sequence is that of Hydrogenase expression/formation protein HoxQ (hoxQ) from Azotobacter vinelandii.